A 283-amino-acid polypeptide reads, in one-letter code: Gap junction alpha-6 protein (283 aa).

The Cytoplasmic segment spans residues 1 to 23 (MSDWSALHQLLEKVQPYSTAGGK). Residues 24–41 (VWIKVLFIFRILLLGTAI) form a helical membrane-spanning segment. Residues 42–76 (ESAWSDEQFEFHCNTQQPGCENVCYDHAFPISHVR) are Extracellular-facing. The helical transmembrane segment at 77 to 99 (LWVLQVIFVSVPILLYLAHVYYV) threads the bilayer. The Cytoplasmic segment spans residues 100–150 (VRQNKKLNKQEEELEAAHFNEASVERHLETIAGEQFKCGSEEQSKVKMRGR). A helical membrane pass occupies residues 151-173 (LLLTYMASIFFKSVFEMAFLLIQ). Topologically, residues 174–208 (WYIYGFTLSALYICEQSPCPRRVDCFLSRPTEKTI) are extracellular. Residues 209-231 (FILFMFVVSVVSFVLDIIELFYV) form a helical membrane-spanning segment. Residues 232-283 (LFKAIKNRMRKAEDEVYCDELPCPSHVSSSTVLTTIDSSEQAVPVELSSVCI) lie on the Cytoplasmic side of the membrane.

The protein belongs to the connexin family. Alpha-type (group II) subfamily. In terms of assembly, a connexon is composed of a hexamer of connexins.

It localises to the cell membrane. The protein resides in the cell junction. The protein localises to the gap junction. Functionally, one gap junction consists of a cluster of closely packed pairs of transmembrane channels, the connexons, through which materials of low MW diffuse from one cell to a neighboring cell. The protein is Gap junction alpha-6 protein (Gja6) of Mus musculus (Mouse).